Consider the following 245-residue polypeptide: Aliphatic sulfonates import ATP-binding protein SsuB 1 (245 aa).

The region spanning 8-223 (VSITGLRKSF…ERADPDILRY (216 aa)) is the ABC transporter domain. Residue 40 to 47 (GPSGTGKT) coordinates ATP.

This sequence belongs to the ABC transporter superfamily. Aliphatic sulfonates importer (TC 3.A.1.17.2) family. In terms of assembly, the complex is composed of two ATP-binding proteins (SsuB), two transmembrane proteins (SsuC) and a solute-binding protein (SsuA).

Its subcellular location is the cell membrane. It carries out the reaction ATP + H2O + aliphatic sulfonate-[sulfonate-binding protein]Side 1 = ADP + phosphate + aliphatic sulfonateSide 2 + [sulfonate-binding protein]Side 1.. In terms of biological role, part of the ABC transporter complex SsuABC involved in aliphatic sulfonates import. Responsible for energy coupling to the transport system. The chain is Aliphatic sulfonates import ATP-binding protein SsuB 1 from Nocardia farcinica (strain IFM 10152).